Here is a 427-residue protein sequence, read N- to C-terminus: MTWFIDRRLNGKNKSMVNRQRFLRRYKAQIKQSISEAINKRSVTDVDSGESVSIPTEDISEPMFHQGRGGLRHRVHPGNDHFVQNDRIERPQGGGGGSGSGQGQASQDGEGQDEFVFQISKDEYLDLLFEDLALPNLKQNQQRQLTEYKTHRAGYTANGVPANISVVRSLQNSLARRTAMTAGKRRELHALEENLAIISNSEPAQLLEEERLRKEIAELRAKIERVPFIDTFDLRYKNYEKRPDPSSQAVMFCLMDVSGSMDQSTKDMAKRFYVLLYLFLSRTYKNVEVVYIRHHTQAKEVDEHEFFYSQETGGTIVSSALKLMDEVVKERYNPAQWNIYAAQASDGDNWADDSPLCHEILAKKLLPVVRYYSYIEITRRAHQTLWREYEHLQSTFDNFAMQHIRDQDDIYPVFRELFHKQNATAKD.

Residues 79–90 (NDHFVQNDRIER) show a composition bias toward basic and acidic residues. Residues 79-110 (NDHFVQNDRIERPQGGGGGSGSGQGQASQDGE) form a disordered region. Positions 92–102 (QGGGGGSGSGQ) are enriched in gly residues.

It belongs to the UPF0229 family.

The polypeptide is UPF0229 protein YeaH (Escherichia coli O9:H4 (strain HS)).